The sequence spans 443 residues: Na(+)-translocating NADH-quinone reductase subunit A (443 aa).

This sequence belongs to the NqrA family. Composed of six subunits; NqrA, NqrB, NqrC, NqrD, NqrE and NqrF.

It carries out the reaction a ubiquinone + n Na(+)(in) + NADH + H(+) = a ubiquinol + n Na(+)(out) + NAD(+). NQR complex catalyzes the reduction of ubiquinone-1 to ubiquinol by two successive reactions, coupled with the transport of Na(+) ions from the cytoplasm to the periplasm. NqrA to NqrE are probably involved in the second step, the conversion of ubisemiquinone to ubiquinol. In Mannheimia succiniciproducens (strain KCTC 0769BP / MBEL55E), this protein is Na(+)-translocating NADH-quinone reductase subunit A.